A 391-amino-acid chain; its full sequence is Succinate--CoA ligase [ADP-forming] subunit beta (391 aa).

Residues 9-245 (KQIFAKYGVP…ISEEDADERE (237 aa)) form the ATP-grasp domain. ATP contacts are provided by residues Lys-46, 53–55 (GRG), Glu-99, Ala-102, and Glu-107. Residues Asn-200 and Asp-214 each coordinate Mg(2+). Residues Asn-265 and 322-324 (GIV) contribute to the substrate site.

It belongs to the succinate/malate CoA ligase beta subunit family. Heterotetramer of two alpha and two beta subunits. The cofactor is Mg(2+).

It carries out the reaction succinate + ATP + CoA = succinyl-CoA + ADP + phosphate. It catalyses the reaction GTP + succinate + CoA = succinyl-CoA + GDP + phosphate. It functions in the pathway carbohydrate metabolism; tricarboxylic acid cycle; succinate from succinyl-CoA (ligase route): step 1/1. Succinyl-CoA synthetase functions in the citric acid cycle (TCA), coupling the hydrolysis of succinyl-CoA to the synthesis of either ATP or GTP and thus represents the only step of substrate-level phosphorylation in the TCA. The beta subunit provides nucleotide specificity of the enzyme and binds the substrate succinate, while the binding sites for coenzyme A and phosphate are found in the alpha subunit. In Sulfurimonas denitrificans (strain ATCC 33889 / DSM 1251) (Thiomicrospira denitrificans (strain ATCC 33889 / DSM 1251)), this protein is Succinate--CoA ligase [ADP-forming] subunit beta.